We begin with the raw amino-acid sequence, 172 residues long: Large ribosomal subunit protein uL10 (172 aa).

It belongs to the universal ribosomal protein uL10 family. As to quaternary structure, part of the ribosomal stalk of the 50S ribosomal subunit. The N-terminus interacts with L11 and the large rRNA to form the base of the stalk. The C-terminus forms an elongated spine to which L12 dimers bind in a sequential fashion forming a multimeric L10(L12)X complex.

Its function is as follows. Forms part of the ribosomal stalk, playing a central role in the interaction of the ribosome with GTP-bound translation factors. The sequence is that of Large ribosomal subunit protein uL10 from Chlorobium phaeovibrioides (strain DSM 265 / 1930) (Prosthecochloris vibrioformis (strain DSM 265)).